We begin with the raw amino-acid sequence, 212 residues long: Ribonuclease HII (212 aa).

Residues 1–206 (MILVGIDEAG…LQDIAPNYYI (206 aa)) enclose the RNase H type-2 domain. 3 residues coordinate a divalent metal cation: Asp-7, Glu-8, and Asp-104.

It belongs to the RNase HII family. Mn(2+) serves as cofactor. Mg(2+) is required as a cofactor.

It localises to the cytoplasm. The enzyme catalyses Endonucleolytic cleavage to 5'-phosphomonoester.. Functionally, endonuclease that specifically degrades the RNA of RNA-DNA hybrids. The polypeptide is Ribonuclease HII (Sulfolobus acidocaldarius (strain ATCC 33909 / DSM 639 / JCM 8929 / NBRC 15157 / NCIMB 11770)).